We begin with the raw amino-acid sequence, 645 residues long: Chaperone protein DnaK (645 aa).

Position 201 is a phosphothreonine; by autocatalysis (Thr-201). The span at 606–629 (NTNNATAGDNNTTDTGSSSNSDGS) shows a compositional bias: low complexity. Residues 606–645 (NTNNATAGDNNTTDTGSSSNSDGSKVVDSDYQEIDKKDGK) are disordered. Residues 630-645 (KVVDSDYQEIDKKDGK) are compositionally biased toward basic and acidic residues.

This sequence belongs to the heat shock protein 70 family.

Acts as a chaperone. This chain is Chaperone protein DnaK, found in Ehrlichia ruminantium (strain Welgevonden).